The sequence spans 492 residues: Sestrin-1 (492 aa).

The tract at residues 71-252 (FADSFAALGR…ICDITNGNHS (182 aa)) is N-terminal domain; may mediate the alkylhydroperoxide reductase activity. C130 acts as the Cysteine sulfenic acid (-SOH) intermediate in catalysis. 2 positions are modified to phosphoserine: S293 and S314. Positions 321-492 (PARDVSRHFE…ALRAITRYMT (172 aa)) are C-terminal domain; mediates TORC1 regulation. L-leucine-binding positions include 386–389 (TYNT), T398, and E463.

Belongs to the sestrin family. Interacts with the GATOR2 complex which is composed of MIOS, SEC13, SEH1L, WDR24 and WDR59; the interaction is negatively regulated by leucine. Interacts with RRAGA, RRAGB, RRAGC and RRAGD; may function as a guanine nucleotide dissociation inhibitor for RRAGs and regulate them. Interacts with KEAP1, RBX1 and SQSTM1; in the SQSTM1-dependent autophagic degradation of KEAP1. May interact with PRDX1.

The protein resides in the nucleus. It localises to the cytoplasm. The enzyme catalyses a hydroperoxide + L-cysteinyl-[protein] = S-hydroxy-L-cysteinyl-[protein] + an alcohol. In terms of biological role, functions as an intracellular leucine sensor that negatively regulates the TORC1 signaling pathway through the GATOR complex. In absence of leucine, binds the GATOR subcomplex GATOR2 and prevents TORC1 signaling. Binding of leucine to SESN2 disrupts its interaction with GATOR2 thereby activating the TORC1 signaling pathway. This stress-inducible metabolic regulator may also play a role in protection against oxidative and genotoxic stresses. May positively regulate the transcription by NFE2L2 of genes involved in the response to oxidative stress by facilitating the SQSTM1-mediated autophagic degradation of KEAP1. Moreover, may prevent the accumulation of reactive oxygen species (ROS) through the alkylhydroperoxide reductase activity born by the N-terminal domain of the protein. Was originally reported to contribute to oxidative stress resistance by reducing PRDX1. However, this could not be confirmed. This is Sestrin-1 from Macaca fascicularis (Crab-eating macaque).